Consider the following 258-residue polypeptide: Ribose-5-phosphate isomerase (258 aa).

This sequence belongs to the ribose 5-phosphate isomerase family.

It localises to the cytoplasm. It catalyses the reaction aldehydo-D-ribose 5-phosphate = D-ribulose 5-phosphate. Its pathway is carbohydrate degradation; pentose phosphate pathway; D-ribose 5-phosphate from D-ribulose 5-phosphate (non-oxidative stage): step 1/1. The chain is Ribose-5-phosphate isomerase (RKI1) from Saccharomyces cerevisiae (strain YJM789) (Baker's yeast).